The chain runs to 317 residues: Aspartate carbamoyltransferase catalytic subunit (317 aa).

The carbamoyl phosphate site is built by Arg65 and Thr66. Lys93 lines the L-aspartate pocket. The carbamoyl phosphate site is built by Arg115, His145, and Gln148. L-aspartate is bound by residues Arg178 and Arg233. Carbamoyl phosphate contacts are provided by Gly274 and Pro275.

The protein belongs to the aspartate/ornithine carbamoyltransferase superfamily. ATCase family. Heterododecamer (2C3:3R2) of six catalytic PyrB chains organized as two trimers (C3), and six regulatory PyrI chains organized as three dimers (R2).

It catalyses the reaction carbamoyl phosphate + L-aspartate = N-carbamoyl-L-aspartate + phosphate + H(+). It functions in the pathway pyrimidine metabolism; UMP biosynthesis via de novo pathway; (S)-dihydroorotate from bicarbonate: step 2/3. Functionally, catalyzes the condensation of carbamoyl phosphate and aspartate to form carbamoyl aspartate and inorganic phosphate, the committed step in the de novo pyrimidine nucleotide biosynthesis pathway. This chain is Aspartate carbamoyltransferase catalytic subunit, found in Methylobacillus flagellatus (strain ATCC 51484 / DSM 6875 / VKM B-1610 / KT).